Reading from the N-terminus, the 383-residue chain is MRAAVGLPEGARIVAAMSGGVDSTVTAALLARAGYDVVGVTLQLYDHGAAISRKGACCAGQDILDARMAAERIGIPHYVLDYESRFREQVIEDFADAYLRGETPIPCVRCNQTVKFRDLLDVARDLGAEAMATGHYVQRAMPGNGGNRPELRRAADPAKDQSYFLFATTREQLDFLRFPLGGMDKPTVRAVAAGLGLSIADKPDSQDICFVPEGKYTTVIDRIRPQGAEAGDVVHLDGRVLGRHEGVTRYTIGQRRGLNIAVGDPLFVVKINADKRQVIVGPREALLTASLTLKEGSWLGAQDSLEAAAEDGQRVLARVRSTREPVPGRLAMIDGALSVVFDGAEEGVAPGQACVLYDPADPDRVLGGGFIAGTTRQMDLNAA.

ATP-binding positions include 16–23 (AMSGGVDS) and Leu42. Catalysis depends on Cys110, which acts as the Nucleophile. Cysteines 110 and 209 form a disulfide. Gly134 serves as a coordination point for ATP. Residues 159-161 (KDQ) are interaction with tRNA. Catalysis depends on Cys209, which acts as the Cysteine persulfide intermediate.

Belongs to the MnmA/TRMU family.

Its subcellular location is the cytoplasm. The catalysed reaction is S-sulfanyl-L-cysteinyl-[protein] + uridine(34) in tRNA + AH2 + ATP = 2-thiouridine(34) in tRNA + L-cysteinyl-[protein] + A + AMP + diphosphate + H(+). Catalyzes the 2-thiolation of uridine at the wobble position (U34) of tRNA, leading to the formation of s(2)U34. The chain is tRNA-specific 2-thiouridylase MnmA from Caulobacter vibrioides (strain ATCC 19089 / CIP 103742 / CB 15) (Caulobacter crescentus).